A 217-amino-acid chain; its full sequence is Small ribosomal subunit protein uS3 (217 aa).

Residues 38–106 (IRKFLKKRLS…KVTLDIQEVR (69 aa)) enclose the KH type-2 domain.

The protein belongs to the universal ribosomal protein uS3 family. Part of the 30S ribosomal subunit. Forms a tight complex with proteins S10 and S14.

Its function is as follows. Binds the lower part of the 30S subunit head. Binds mRNA in the 70S ribosome, positioning it for translation. This is Small ribosomal subunit protein uS3 from Desulfotalea psychrophila (strain LSv54 / DSM 12343).